The sequence spans 223 residues: MOB-like protein phocein (223 aa).

8 residues coordinate Zn(2+): C92, C97, C110, H113, C119, H127, H169, and H174.

The protein belongs to the MOB1/phocein family. In terms of assembly, part of the core of STRIPAK complexes composed of PP2A catalytic and scaffolding subunits, the striatins (PP2A regulatory subunits), the striatin-associated proteins MOB4, STRIP1 and STRIP2, PDCD10 and members of the STE20 kinases, such as STK24 and STK26.

It is found in the cytoplasm. The protein localises to the membrane. It localises to the golgi apparatus. Its subcellular location is the golgi stack membrane. Its function is as follows. Part of the striatin-interacting phosphatase and kinase (STRIPAK) complexes. STRIPAK complexes have critical roles in protein (de)phosphorylation and are regulators of multiple signaling pathways including Hippo, MAPK, nuclear receptor and cytoskeleton remodeling. Different types of STRIPAK complexes are involved in a variety of biological processes such as cell growth, differentiation, apoptosis, metabolism and immune regulation. In Gallus gallus (Chicken), this protein is MOB-like protein phocein (MOB4).